We begin with the raw amino-acid sequence, 298 residues long: N-acetylmuramic acid 6-phosphate etherase (298 aa).

In terms of domain architecture, SIS spans 55–218 (IHAQVSGGGR…STGLMIKSGK (164 aa)). Residue Glu83 is the Proton donor of the active site. The active site involves Glu114.

Belongs to the GCKR-like family. MurNAc-6-P etherase subfamily. In terms of assembly, homodimer.

It carries out the reaction N-acetyl-D-muramate 6-phosphate + H2O = N-acetyl-D-glucosamine 6-phosphate + (R)-lactate. Its pathway is amino-sugar metabolism; 1,6-anhydro-N-acetylmuramate degradation. It participates in amino-sugar metabolism; N-acetylmuramate degradation. The protein operates within cell wall biogenesis; peptidoglycan recycling. Specifically catalyzes the cleavage of the D-lactyl ether substituent of MurNAc 6-phosphate, producing GlcNAc 6-phosphate and D-lactate. Together with AnmK, is also required for the utilization of anhydro-N-acetylmuramic acid (anhMurNAc) either imported from the medium or derived from its own cell wall murein, and thus plays a role in cell wall recycling. This Shigella flexneri protein is N-acetylmuramic acid 6-phosphate etherase.